The primary structure comprises 524 residues: Serine/threonine-protein kinase PAK 2 (524 aa).

Residues 1 to 81 are disordered; the sequence is MSDNGELEDK…PEISPPSDFE (81 aa). Ser2 carries the N-acetylserine modification. Residues Ser2, Ser20, Ser55, Ser58, and Ser59 each carry the phosphoserine modification. Position 60 is a phosphothreonine (Thr60). N6-acetyllysine is present on Lys62. Ser64 bears the Phosphoserine mark. Over residues 67–81 the composition is skewed to basic and acidic residues; it reads KEKERPEISPPSDFE. The tract at residues 69 to 112 is GTPase-binding; it reads KERPEISPPSDFEHTIHVGFDAVTGEFTGMPEQWARLLQTSNIT. The interval 69-137 is autoregulatory region; it reads KERPEISPPS…KFYDSNTVKQ (69 aa). In terms of domain architecture, CRIB spans 74–87; sequence ISPPSDFEHTIHVG. Positions 88 to 248 are linker; the sequence is FDAVTGEFTG…IVSIGDPKKK (161 aa). Lys128 bears the N6-acetyllysine mark. Thr134 is subject to Phosphothreonine. Position 139 is a phosphotyrosine (Tyr139). Residue Ser141 is modified to Phosphoserine. Residues 142 to 190 form a disordered region; sequence FTPPEKDGFPSGTPALNTKGSETSAVVTEEDDDDEDAAPPVIAPRPDHT. Thr143 carries the post-translational modification Phosphothreonine. Residue Ser152 is modified to Phosphoserine. 3 positions are modified to phosphothreonine: Thr154, Thr159, and Thr169. The span at 155–167 shows a compositional bias: polar residues; it reads PALNTKGSETSAV. The segment covering 169-178 has biased composition (acidic residues); sequence TEEDDDDEDA. Ser197 carries the post-translational modification Phosphoserine. The segment at 204–228 is disordered; sequence APVGDSNVDSGAKSSDKQKKKAKMT. The Nuclear localization signal signature appears at 245 to 251; the sequence is PKKKYTR. The Protein kinase domain occupies 249 to 500; the sequence is YTRYEKIGQG…AKELLQHPFL (252 aa). ATP is bound by residues 255-263 and Lys278; that span reads IGQGASGTV. Asp368 serves as the catalytic Proton acceptor. Thr402 bears the Phosphothreonine; by autocatalysis mark.

This sequence belongs to the protein kinase superfamily. STE Ser/Thr protein kinase family. STE20 subfamily. As to quaternary structure, interacts tightly with GTP-bound but not GDP-bound CDC42/p21 and RAC1. Interacts with SH3MD4. Interacts with SCRIB. Interacts with ARHGEF7 and GIT1. PAK-2p34 interacts with ARHGAP10. Interacts with RAC1. Post-translationally, full-length PAK2 is autophosphorylated when activated by CDC42/p21. Following cleavage, both peptides, PAK-2p27 and PAK-2p34, become highly autophosphorylated. Autophosphorylation of PAK-2p27 can occur in the absence of any effectors and is dependent on phosphorylation of Thr-402, because PAK-2p27 is acting as an exogenous substrate. In terms of processing, during apoptosis proteolytically cleaved by caspase-3 or caspase-3-like proteases to yield active PAK-2p34. Ubiquitinated, leading to its proteasomal degradation.

It is found in the cytoplasm. Its subcellular location is the nucleus. The protein resides in the perinuclear region. It localises to the membrane. The enzyme catalyses L-seryl-[protein] + ATP = O-phospho-L-seryl-[protein] + ADP + H(+). It catalyses the reaction L-threonyl-[protein] + ATP = O-phospho-L-threonyl-[protein] + ADP + H(+). Its activity is regulated as follows. Activated by binding small G proteins. Binding of GTP-bound CDC42 or RAC1 to the autoregulatory region releases monomers from the autoinhibited dimer, enables phosphorylation of Thr-402 and allows the kinase domain to adopt an active structure. Following caspase cleavage, autophosphorylated PAK-2p34 is constitutively active. Its function is as follows. Serine/threonine protein kinase that plays a role in a variety of different signaling pathways including cytoskeleton regulation, cell motility, cell cycle progression, apoptosis or proliferation. Acts as a downstream effector of the small GTPases CDC42 and RAC1. Activation by the binding of active CDC42 and RAC1 results in a conformational change and a subsequent autophosphorylation on several serine and/or threonine residues. Full-length PAK2 stimulates cell survival and cell growth. Phosphorylates MAPK4 and MAPK6 and activates the downstream target MAPKAPK5, a regulator of F-actin polymerization and cell migration. Phosphorylates JUN and plays an important role in EGF-induced cell proliferation. Phosphorylates many other substrates including histone H4 to promote assembly of H3.3 and H4 into nucleosomes, BAD, ribosomal protein S6, or MBP. Phosphorylates CASP7, thereby preventing its activity. Additionally, associates with ARHGEF7 and GIT1 to perform kinase-independent functions such as spindle orientation control during mitosis. On the other hand, apoptotic stimuli such as DNA damage lead to caspase-mediated cleavage of PAK2, generating PAK-2p34, an active p34 fragment that translocates to the nucleus and promotes cellular apoptosis involving the JNK signaling pathway. Caspase-activated PAK2 phosphorylates MKNK1 and reduces cellular translation. The chain is Serine/threonine-protein kinase PAK 2 (Pak2) from Rattus norvegicus (Rat).